Reading from the N-terminus, the 583-residue chain is Torsin-1A-interacting protein 1 (583 aa).

The span at 1-12 shows a compositional bias: basic and acidic residues; sequence MAGDGRRAEAVR. 2 disordered regions span residues 1-254 and 271-293; these read MAGD…RSSS and AHDKQPSVLSSGYQKTPQEWAPQ. Topologically, residues 1–338 are nuclear; it reads MAGDGRRAEA…NASFVKRNRW (338 aa). Serine 60 carries the post-translational modification Phosphoserine. Basic and acidic residues-rich tracts occupy residues 74-101 and 115-124; these read VAKERSPVGKRTRLEEFRSDSAKEEVRE and RPQETEEMKT. Phosphoserine occurs at positions 135 and 143. A Methionine sulfoxide modification is found at methionine 146. Phosphoserine occurs at positions 154, 156, and 157. Polar residues predominate over residues 165–174; the sequence is QTDLSQTISK. Phosphoserine occurs at positions 186 and 215. Residues 216-225 are compositionally biased toward acidic residues; it reads EEGETEEDDQ. Threonine 220 is modified (phosphothreonine). A phosphoserine mark is found at serine 227, serine 230, and serine 242. The span at 238–250 shows a compositional bias: basic and acidic residues; sequence RSRDSDESGDKTT. The segment covering 277–287 has biased composition (polar residues); sequence SVLSSGYQKTP. At methionine 301 the chain carries Methionine sulfoxide. Serine 305 bears the Phosphoserine mark. A Glycyl lysine isopeptide (Lys-Gly) (interchain with G-Cter in SUMO2) cross-link involves residue lysine 308. Phosphoserine occurs at positions 309 and 315. The disordered stretch occupies residues 309–328; the sequence is SELGNQSPSTSSRQVTGQPQ. A helical transmembrane segment spans residues 339 to 355; that stretch reads WLLPLIAALASGSFWFF. Topologically, residues 356–583 are perinuclear space; that stretch reads STPEVETTAV…ENALKRGICL (228 aa). The tract at residues 356–583 is interaction with TOR1A; the sequence is STPEVETTAV…ENALKRGICL (228 aa). Residues 359-435 are a coiled coil; it reads EVETTAVQEF…SEQIADAYSS (77 aa). The N-linked (GlcNAc...) asparagine glycan is linked to asparagine 399. Position 552 is a methionine sulfoxide (methionine 552).

It belongs to the TOR1AIP family. As to quaternary structure, interacts with ATP1B4. Interacts with TOR1A (ATP-bound). Interacts with TOR1B, TOR2A and TOR3A. Interacts with VIM. Phosphorylated. Dephosphorylated at Ser-309 and Ser-315 by serine/threonine-protein phosphatase PP1. In terms of tissue distribution, expressed in muscle, liver and kidney. Major isoform present in liver, brain and heart (at protein level). Expressed at lower levels than isoform 4 in lung, kidney and spleen (at protein level). Similar levels of isoforms 1 and 4 are observed in ovary, testis and pancreas (at protein level). As to expression, expressed at higher levels than isoform 1 in lung, kidney and spleen (at protein level). Expressed at lower levels than isoform 1 in liver, brain and heart (at protein level). Similar levels of isoforms 1 and 4 are observed in ovary, testis and pancreas (at protein level).

The protein resides in the nucleus inner membrane. It localises to the nucleus envelope. Its subcellular location is the nucleus. In terms of biological role, required for nuclear membrane integrity. Induces TOR1A and TOR1B ATPase activity and is required for their location on the nuclear membrane. Binds to A- and B-type lamins. Possible role in membrane attachment and assembly of the nuclear lamina. The polypeptide is Torsin-1A-interacting protein 1 (TOR1AIP1) (Homo sapiens (Human)).